We begin with the raw amino-acid sequence, 932 residues long: Glycine dehydrogenase (decarboxylating) (932 aa).

The residue at position 685 (Lys685) is an N6-(pyridoxal phosphate)lysine.

It belongs to the GcvP family. As to quaternary structure, the glycine cleavage system is composed of four proteins: P, T, L and H. It depends on pyridoxal 5'-phosphate as a cofactor.

The catalysed reaction is N(6)-[(R)-lipoyl]-L-lysyl-[glycine-cleavage complex H protein] + glycine + H(+) = N(6)-[(R)-S(8)-aminomethyldihydrolipoyl]-L-lysyl-[glycine-cleavage complex H protein] + CO2. Functionally, the glycine cleavage system catalyzes the degradation of glycine. The P protein binds the alpha-amino group of glycine through its pyridoxal phosphate cofactor; CO(2) is released and the remaining methylamine moiety is then transferred to the lipoamide cofactor of the H protein. The chain is Glycine dehydrogenase (decarboxylating) from Brucella suis biovar 1 (strain 1330).